Here is a 263-residue protein sequence, read N- to C-terminus: MEDETELCFRSNKVTRLEMFVCTYGGKITSLACSHMELIKMLQIAEPVKALNCNFGHQCLPGYESLIKTPKKTKNMLRRPRKTEGDGTCFNSAIEASILFKDKMYKLKCFPSTGEIQVPGVIFPDFEDGKNIIQQWVDFLQHQPIEKKIQIIEFKTIMINFKFQINPVSPRVIIHLKKFAALLEHIPTPYPIREIKPPLEDSKVSAKFMVSPGKKVRINVFLKGKINILGCNTKESAEIIYTFLKDLISVHWQEILCVLPVPD.

It belongs to the asfivirus B263R family.

Its function is as follows. Putative TATA-binding protein. The polypeptide is Putative TATA-binding protein pB263R (Ornithodoros (relapsing fever ticks)).